The chain runs to 516 residues: Maturase K (516 aa).

Belongs to the intron maturase 2 family. MatK subfamily.

Its subcellular location is the plastid. It localises to the chloroplast. Functionally, usually encoded in the trnK tRNA gene intron. Probably assists in splicing its own and other chloroplast group II introns. This Galanthus nivalis (Common snowdrop) protein is Maturase K.